Here is a 336-residue protein sequence, read N- to C-terminus: Mitochondrial thiamine diphosphate carrier 2 (336 aa).

The next 6 membrane-spanning stretches (helical) occupy residues 11-27 (RRAL…GGIS), 88-105 (VPAL…FTVL), 127-150 (YLSY…FDLL), 182-199 (LYSG…YAGL), 230-246 (SVSS…AGTF), and 303-322 (GLFP…FVAY). Solcar repeat units lie at residues 11–111 (RRAL…LKTF), 124–210 (LSPY…FKRS), and 231–328 (VSSF…ISDW).

The protein belongs to the mitochondrial carrier (TC 2.A.29) family. As to expression, ubiquitous.

It localises to the mitochondrion inner membrane. Its function is as follows. Mitochondrial transporter that mediates uptake of thiamine diphosphate (ThDP) into mitochondria. The polypeptide is Mitochondrial thiamine diphosphate carrier 2 (Zea mays (Maize)).